The chain runs to 616 residues: Homeodomain-interacting protein kinase 4 (616 aa).

Residues 11–347 enclose the Protein kinase domain; that stretch reads YDIIEVLGKG…PSAALRHPFV (337 aa). ATP is bound by residues 17–25 and Lys40; that span reads LGKGTFGEV. The active-site Proton acceptor is the Asp136. The interval 485–616 is disordered; sequence RHKARKPPAG…SFLQHVTGHH (132 aa). Over residues 496–511 the composition is skewed to polar residues; the sequence is KSDSNLSNLIRLSQVS. A Phosphoserine modification is found at Ser511.

The protein belongs to the protein kinase superfamily. CMGC Ser/Thr protein kinase family. HIPK subfamily. In terms of processing, autophosphorylated.

It localises to the cytoplasm. The enzyme catalyses L-seryl-[protein] + ATP = O-phospho-L-seryl-[protein] + ADP + H(+). It carries out the reaction L-threonyl-[protein] + ATP = O-phospho-L-threonyl-[protein] + ADP + H(+). Functionally, protein kinase that phosphorylates TP53, and thus induces TP53 repression of BIRC5 promoter. May act as a corepressor of transcription factors (Potential). In Macaca fascicularis (Crab-eating macaque), this protein is Homeodomain-interacting protein kinase 4 (HIPK4).